We begin with the raw amino-acid sequence, 150 residues long: uncharacterized protein (150 aa).

3 helical membrane passes run 50 to 70 (VVSV…VIHL), 80 to 100 (LYIT…QLWL), and 127 to 147 (KVVI…FFIE).

The protein resides in the membrane. This is an uncharacterized protein from Schizosaccharomyces pombe (strain 972 / ATCC 24843) (Fission yeast).